Consider the following 726-residue polypeptide: Probable cyclic nucleotide-gated ion channel 14 (726 aa).

Topologically, residues M1–V86 are cytoplasmic. A helical membrane pass occupies residues F87–V107. Residues K108–L122 are Extracellular-facing. A helical transmembrane segment spans residues G123–I143. Residues K144 to D177 are Cytoplasmic-facing. A helical transmembrane segment spans residues F178 to P198. Residues S199–A211 lie on the Extracellular side of the membrane. A helical membrane pass occupies residues L212–A232. At E233 to N252 the chain is on the cytoplasmic side. Residues L253–E273 form a helical membrane-spanning segment. The Extracellular portion of the chain corresponds to R274–T377. A helical membrane pass occupies residues M378–M398. Residues Q399–D726 are Cytoplasmic-facing. A nucleoside 3',5'-cyclic phosphate is bound by residues L481 to L605 and E552. A calmodulin-binding region spans residues F597 to Y612. The IQ domain occupies R617–F646. Residues K707 to D726 form a disordered region.

It belongs to the cyclic nucleotide-gated cation channel (TC 1.A.1.5) family. Homotetramer or heterotetramer.

It is found in the cell membrane. In terms of biological role, probable cyclic nucleotide-gated ion channel. This is Probable cyclic nucleotide-gated ion channel 14 (CNGC14) from Arabidopsis thaliana (Mouse-ear cress).